We begin with the raw amino-acid sequence, 415 residues long: Carboxypeptidase G2 (415 aa).

An N-terminal signal peptide occupies residues 1 to 22 (MRPSIHRTAIAAVLATAFVAGT). Histidine 112 is a Zn(2+) binding site. Aspartate 114 is an active-site residue. Aspartate 141 is a binding site for Zn(2+). Residue glutamate 175 is the Proton acceptor of the active site. Zn(2+) contacts are provided by glutamate 176, glutamate 200, and histidine 385.

This sequence belongs to the peptidase M20A family. As to quaternary structure, homodimer. It depends on Zn(2+) as a cofactor.

The catalysed reaction is Release of C-terminal glutamate residues from a wide range of N-acylating moieties, including peptidyl, aminoacyl, benzoyl, benzyloxycarbonyl, folyl and pteroyl groups.. Catalyzes the hydrolysis of reduced and non-reduced folates to pteroates and L-glutamate. This enzyme has a broad specificity. The chain is Carboxypeptidase G2 (cpg2) from Pseudomonas sp. (strain RS-16).